Reading from the N-terminus, the 885-residue chain is Translation initiation factor IF-2 (885 aa).

Residues 1–295 are disordered; the sequence is MTDNKDDKTI…EKFKRSQMQE (295 aa). Positions 63–77 are enriched in low complexity; that stretch reads PVAAAPAAARPAEQR. Pro residues predominate over residues 78-94; that stretch reads PMPPQPSGRPAPQPQPH. The segment covering 130-183 has biased composition (basic and acidic residues); sequence RDAEEAKRRAEEEVRRRREEEERIAREKEEAARRAAEEAARPAVEAEKVEEKVE. The span at 184–201 shows a compositional bias: low complexity; it reads AATPAVAETRPLSERPAP. Residues 383–550 form the tr-type G domain; that stretch reads ARPPIVTIMG…AILLQSEILD (168 aa). Positions 392–399 are G1; it reads GHVDHGKT. 392–399 contacts GTP; sequence GHVDHGKT. A G2 region spans residues 417-421; the sequence is GITQH. Positions 438 to 441 are G3; sequence DTPG. GTP-binding positions include 438 to 442 and 492 to 495; these read DTPGH and NKID. The tract at residues 492–495 is G4; that stretch reads NKID. The interval 528 to 530 is G5; sequence SAK.

It belongs to the TRAFAC class translation factor GTPase superfamily. Classic translation factor GTPase family. IF-2 subfamily.

The protein localises to the cytoplasm. In terms of biological role, one of the essential components for the initiation of protein synthesis. Protects formylmethionyl-tRNA from spontaneous hydrolysis and promotes its binding to the 30S ribosomal subunits. Also involved in the hydrolysis of GTP during the formation of the 70S ribosomal complex. This Sinorhizobium medicae (strain WSM419) (Ensifer medicae) protein is Translation initiation factor IF-2.